Reading from the N-terminus, the 339-residue chain is Protein pelota homolog (339 aa).

It belongs to the eukaryotic release factor 1 family. Pelota subfamily. As to quaternary structure, monomer. The cofactor is a divalent metal cation.

The protein resides in the cytoplasm. Its function is as follows. May function in recognizing stalled ribosomes, interact with stem-loop structures in stalled mRNA molecules, and effect endonucleolytic cleavage of the mRNA. May play a role in the release non-functional ribosomes and degradation of damaged mRNAs. Has endoribonuclease activity. The chain is Protein pelota homolog (pelA) from Thermoplasma acidophilum (strain ATCC 25905 / DSM 1728 / JCM 9062 / NBRC 15155 / AMRC-C165).